A 623-amino-acid polypeptide reads, in one-letter code: Zinc finger protein 131 (623 aa).

One can recognise a BTB domain in the interval 34–98 (TDITLIVDGH…TYTAKLMIQG (65 aa)). The Nuclear localization signal 1 signature appears at 137–148 (TGKNEAKKRKIA). C2H2-type zinc fingers lie at residues 261–283 (FHCE…MKSH), 288–311 (FKCE…NCYH), and 328–350 (HVCQ…LRKH). Residues Lys-289 and Lys-295 each participate in a glycyl lysine isopeptide (Lys-Gly) (interchain with G-Cter in SUMO2) cross-link. Residues 317–328 (VSKKQRTGKKIH) carry the Nuclear localization signal 2 motif. The C2H2-type 4; degenerate zinc-finger motif lies at 356-381 (FECPNCHERFARNSTLKCHLTACQTG). 2 C2H2-type zinc fingers span residues 392–414 (YECQ…LVIH) and 420–443 (NHCT…SDAH). Basic and acidic residues predominate over residues 573–617 (NQEERESSQADAAEAAREDHEDAEDLETKPTVDSEAEKAENEDRT). The interval 573 to 623 (NQEERESSQADAAEAAREDHEDAEDLETKPTVDSEAEKAENEDRTALPVLE) is disordered. Lys-601 is covalently cross-linked (Glycyl lysine isopeptide (Lys-Gly) (interchain with G-Cter in SUMO)).

It belongs to the krueppel C2H2-type zinc-finger protein family. Monosumoylated at Lys-601 by CBX4 and UHRF2. Sumoylation may potentiate ZNF131 inhibition of estrogen signaling. Sumoylation does not interfere with ubiquitination. In terms of processing, ubiquitinated. In terms of tissue distribution, predominant expression is found in different brain areas such as the occipital and temporal lobe, the nucleus caudatus, hippocampus, and the cerebellum as well as in testis and thymus.

The protein localises to the nucleus. Plays a role during development and organogenesis as well as in the function of the adult central nervous system. May be involved in transcriptional regulation as a repressor of ESR1/ER-alpha signaling. The sequence is that of Zinc finger protein 131 (ZNF131) from Homo sapiens (Human).